Consider the following 125-residue polypeptide: uncharacterized protein (125 aa).

The HTH cro/C1-type domain maps to 19–73; it reads IYSLRLAKGLSRQQLAEVIDVTHQQLQKYEKAINRISVGRLVLIAEALDRNIDYF. Residues 30 to 49 constitute a DNA-binding region (H-T-H motif); that stretch reads RQQLAEVIDVTHQQLQKYEK.

This is an uncharacterized protein from Rickettsia conorii (strain ATCC VR-613 / Malish 7).